Reading from the N-terminus, the 152-residue chain is SsrA-binding protein (152 aa).

Residues 130–152 form a disordered region; it reads HDKRQDLKQRQDKREMERAMKQR. Over residues 132-152 the composition is skewed to basic and acidic residues; sequence KRQDLKQRQDKREMERAMKQR.

It belongs to the SmpB family.

Its subcellular location is the cytoplasm. In terms of biological role, required for rescue of stalled ribosomes mediated by trans-translation. Binds to transfer-messenger RNA (tmRNA), required for stable association of tmRNA with ribosomes. tmRNA and SmpB together mimic tRNA shape, replacing the anticodon stem-loop with SmpB. tmRNA is encoded by the ssrA gene; the 2 termini fold to resemble tRNA(Ala) and it encodes a 'tag peptide', a short internal open reading frame. During trans-translation Ala-aminoacylated tmRNA acts like a tRNA, entering the A-site of stalled ribosomes, displacing the stalled mRNA. The ribosome then switches to translate the ORF on the tmRNA; the nascent peptide is terminated with the 'tag peptide' encoded by the tmRNA and targeted for degradation. The ribosome is freed to recommence translation, which seems to be the essential function of trans-translation. This is SsrA-binding protein from Thermosynechococcus vestitus (strain NIES-2133 / IAM M-273 / BP-1).